A 188-amino-acid chain; its full sequence is Elongation factor P (188 aa).

The protein belongs to the elongation factor P family.

It localises to the cytoplasm. The protein operates within protein biosynthesis; polypeptide chain elongation. Functionally, involved in peptide bond synthesis. Stimulates efficient translation and peptide-bond synthesis on native or reconstituted 70S ribosomes in vitro. Probably functions indirectly by altering the affinity of the ribosome for aminoacyl-tRNA, thus increasing their reactivity as acceptors for peptidyl transferase. This is Elongation factor P (efp) from Ureaplasma parvum serovar 3 (strain ATCC 700970).